Consider the following 363-residue polypeptide: Probable auxin efflux carrier component 5a (363 aa).

10 helical membrane-spanning segments follow: residues 7–27 (VYKV…GYGS), 39–59 (CDAV…FEFT), 72–92 (VAAD…WARF), 103–123 (SITS…VPMA), 134–154 (LVVQ…LFVL), 222–242 (FVGI…PSAF), 246–266 (VLIM…LFMA), 281–301 (LGLV…SIAV), 307–327 (VLRV…FIFA), and 342–362 (IFGM…LELI).

It belongs to the auxin efflux carrier (TC 2.A.69.1) family. As to expression, expressed in leaves, shoot apex and panicles. Expressed in roots, stem bases, stems, leaves and young panicles.

The protein resides in the membrane. Functionally, may act as a component of the auxin efflux carrier. This chain is Probable auxin efflux carrier component 5a, found in Oryza sativa subsp. japonica (Rice).